The primary structure comprises 377 residues: Chaperone protein DnaJ (377 aa).

A J domain is found at 5-70; that stretch reads DFYEVLGVDR…EKRSAYDRMG (66 aa). The CR-type zinc-finger motif lies at 136 to 214; that stretch reads GCKKEISFTA…CHGTGVKDKS (79 aa). Cysteine 149, cysteine 152, cysteine 166, cysteine 169, cysteine 188, cysteine 191, cysteine 202, and cysteine 205 together coordinate Zn(2+). 4 CXXCXGXG motif repeats span residues 149 to 156, 166 to 173, 188 to 195, and 202 to 209; these read CETCDGKG, CSTCGGHG, CPNCGGSG, and CNDCHGTG. The interval 353-377 is disordered; the sequence is LDGDSKHHQSPKKKSFFEKLGDLFD. Positions 367 to 377 are enriched in basic and acidic residues; sequence SFFEKLGDLFD.

This sequence belongs to the DnaJ family. In terms of assembly, homodimer. Requires Zn(2+) as cofactor.

Its subcellular location is the cytoplasm. Its function is as follows. Participates actively in the response to hyperosmotic and heat shock by preventing the aggregation of stress-denatured proteins and by disaggregating proteins, also in an autonomous, DnaK-independent fashion. Unfolded proteins bind initially to DnaJ; upon interaction with the DnaJ-bound protein, DnaK hydrolyzes its bound ATP, resulting in the formation of a stable complex. GrpE releases ADP from DnaK; ATP binding to DnaK triggers the release of the substrate protein, thus completing the reaction cycle. Several rounds of ATP-dependent interactions between DnaJ, DnaK and GrpE are required for fully efficient folding. Also involved, together with DnaK and GrpE, in the DNA replication of plasmids through activation of initiation proteins. In Psychrobacter sp. (strain PRwf-1), this protein is Chaperone protein DnaJ.